The primary structure comprises 200 residues: 3-isopropylmalate dehydratase small subunit (200 aa).

Belongs to the LeuD family. LeuD type 1 subfamily. As to quaternary structure, heterodimer of LeuC and LeuD.

The catalysed reaction is (2R,3S)-3-isopropylmalate = (2S)-2-isopropylmalate. Its pathway is amino-acid biosynthesis; L-leucine biosynthesis; L-leucine from 3-methyl-2-oxobutanoate: step 2/4. Catalyzes the isomerization between 2-isopropylmalate and 3-isopropylmalate, via the formation of 2-isopropylmaleate. The sequence is that of 3-isopropylmalate dehydratase small subunit from Haemophilus influenzae (strain PittEE).